A 338-amino-acid chain; its full sequence is N-acetyl-gamma-glutamyl-phosphate reductase (338 aa).

Cysteine 148 is an active-site residue.

This sequence belongs to the NAGSA dehydrogenase family. Type 1 subfamily.

The protein localises to the cytoplasm. The enzyme catalyses N-acetyl-L-glutamate 5-semialdehyde + phosphate + NADP(+) = N-acetyl-L-glutamyl 5-phosphate + NADPH + H(+). The protein operates within amino-acid biosynthesis; L-arginine biosynthesis; N(2)-acetyl-L-ornithine from L-glutamate: step 3/4. Catalyzes the NADPH-dependent reduction of N-acetyl-5-glutamyl phosphate to yield N-acetyl-L-glutamate 5-semialdehyde. The chain is N-acetyl-gamma-glutamyl-phosphate reductase from Leptospira interrogans serogroup Icterohaemorrhagiae serovar copenhageni (strain Fiocruz L1-130).